Reading from the N-terminus, the 1010-residue chain is Collagen, type I, alpha 1b (1010 aa).

Pro residues predominate over residues 1 to 24; sequence SSGPPQPGPMGPMGPRGPPGPPGS. A disordered region spans residues 1-969; sequence SSGPPQPGPM…PDGTQKSPAR (969 aa). The segment covering 25–48 has biased composition (low complexity); sequence SGPQGFTGPPGEPGEPGASGAMGS. Residues 58 to 72 are compositionally biased toward basic and acidic residues; sequence NGDDGEPGKPGRPGE. Low complexity predominate over residues 73–82; that stretch reads RGAAGPQGAR. The segment covering 145-159 has biased composition (pro residues); it reads GGPPGPTGPAGPPGF. Gly residues-rich tracts occupy residues 160–179 and 203–212; these read PGGA…GNEG and GTDGGPGAKG. Low complexity-rich tracts occupy residues 213–268 and 300–310; these read SPGA…PGPA and ERGAPGARGFP. Residues 311 to 323 are compositionally biased toward gly residues; it reads GADGGAGGKGAPG. 2 stretches are compositionally biased toward low complexity: residues 324–343 and 405–448; these read ERGA…PGSK and PAGA…APGE. Composition is skewed to gly residues over residues 468–477, 486–495, and 519–528; these read GAPGLGGPTG, GAPGGLGAPG, and GGKGGDGAPG. Low complexity-rich tracts occupy residues 559 to 568 and 581 to 596; these read VAGPTGPRGA and AGFA…PGAK. Composition is skewed to gly residues over residues 609 to 618 and 633 to 642; these read GAPGPGGPVG and GARGGAGPPG. Composition is skewed to low complexity over residues 643-662, 679-701, and 796-805; these read ATGF…AGAA, ETGA…SGEK, and APGAVGPSGK. The span at 834–847 shows a compositional bias: basic and acidic residues; it reads KGDRGEAGEAGDRG. The span at 872–900 shows a compositional bias: low complexity; that stretch reads PAGASGPAGPRGPAGSNGAAGKDGMNGLP. The span at 918–933 shows a compositional bias: pro residues; that stretch reads AGPPGPPGPAGPPGPP. Residues 982 to 1010 form the Fibrillar collagen NC1 domain; the sequence is RLPLLDLAPMDVGAPDQEFGVEVGPVCFL.

It belongs to the fibrillar collagen family.

The protein resides in the secreted. The protein localises to the extracellular space. Its subcellular location is the extracellular matrix. The chain is Collagen, type I, alpha 1b from Epinephelus marginatus (Dusky grouper).